A 419-amino-acid chain; its full sequence is MDISAYQHMNIRMSTRGKRPLRNLTPNDKVRAIQRIHNGETKASVSRDIGVPESTLRGWCKNEQKLRFMCRQLGPDHLGLDTPPEKRAKFELQLQLPPKFVALPPNYEELGFGALPYSPADYPVQNESLLEKLSLVEFVKKNGGLHPEGALHPGQAGVMDYSNNMLHQLNLLALLNSKLTPQTADVLVDAQPKSEDNKVIDSPAASEDYSKNNYPLLSVKNWAKDPAKRVNSANQPEQVNDKNNNALEANSSAPQALVTEQAKTPMFSDTTMPLLPAPFPNPADLAPVIAPVTPANAPPTGTDNQGAALLDWCKLFNASLNFLAFAAAAASMQPGGGGPGGPSYNPNQMASGGSEPDLETYPFNEALLKRLSPLAHSEASNESYCDSEPEDLSVRSCASKASSRSHTPDKSVGSSDAEQ.

An HTH psq-type domain is found at 15 to 66 (TRGKRPLRNLTPNDKVRAIQRIHNGETKASVSRDIGVPESTLRGWCKNEQKL). Residues 42-62 (KASVSRDIGVPESTLRGWCKN) constitute a DNA-binding region (H-T-H motif). Disordered regions lie at residues 333-359 (QPGGGGPGGPSYNPNQMASGGSEPDLE) and 378-419 (EASN…DAEQ).

As to quaternary structure, interacts with itself, dan, ey and dac to form a complex (or complexes) containing the RD factors. In terms of tissue distribution, coexpressed with dan in the presumptive distal antenna, but not in the leg imaginal disk. Both proteins are also expressed in the brain and the eye region of the eye-antenna disk. First detected in early L3 eye disks in cells surrounding the newly initiated morphogenetic furrow. Highly expressed in evenly spaced clusters of cells anterior to the furrow, lower levels within and posterior to the furrow.

It localises to the nucleus. Its function is as follows. Probable transcription factor with a role in the retinal determination (RD) network. Regulates ato expression and is required for normal R8 induction and differentiation. Danr appears to repress Dan expression, but Dan is required for Danr expression anterior to the morphogenetic furrow (MF). Dan and Danr lie downstream of so and require dac function for highest levels of expression. Contributes to differentiation of antenna-specific characteristics; effector gene that acts downstream of homothorax (hth), Distal-less (Dll), cut (ct) and spineless (ss) genes to control differentiation of distal antennal structures. In Drosophila melanogaster (Fruit fly), this protein is Protein distal antenna-related.